The sequence spans 124 residues: Magnetosome protein MamC (124 aa).

Topologically, residues 2–8 (PFHLAPY) are cytoplasmic. A helical transmembrane segment spans residues 9–29 (LAKSVPGVGVLGALVGGAAAL). At 30–64 (AKNVRLLKEKRITNTEAAIDTGKETVGAGLATALS) the chain is on the lumenal side. Residues 36 to 56 (LKEKRITNTEAAIDTGKETVG) are MIC, when fused with the C-terminus of maltose-binding protein (MBP) or expressed as a fragment, improves quality of iron particles during precipitation experiments, binds magnetite. The helical transmembrane segment at 65–85 (AVAATAVGGGLVVSLGTALVA) threads the bilayer. Residues 86-124 (GVAAKYAWDRGVDLVEKELNRGKAANGASDEDILRDELA) lie on the Cytoplasmic side of the membrane.

This sequence belongs to the magnetosome MamC family. In terms of assembly, probably interacts with MamA.

It is found in the magnetosome membrane. Functionally, probably involved in magnetite crystal growth. The lumenal domain may bind the magnetite crystals, affecting crystal size and shape. The sequence is that of Magnetosome protein MamC from Paramagnetospirillum magneticum (strain ATCC 700264 / AMB-1) (Magnetospirillum magneticum).